The primary structure comprises 806 residues: Mitogen-activated protein kinase 7 (806 aa).

Positions 1–23 (MAEPLKEEDGEDGSGEPPGRVKA) are disordered. At Ala-2 the chain carries N-acetylalanine. Positions 2 to 77 (AEPLKEEDGE…VVSSARRRLT (76 aa)) are required for cytoplasmic targeting. The Protein kinase domain occupies 55 to 347 (YEIIETIGNG…AAAALRHPFL (293 aa)). Residues 61 to 69 (IGNGAYGVV) and Lys-84 contribute to the ATP site. Residues 78–139 (GQQVAIKKIP…FRSVYVVLDL (62 aa)) form a required for binding to MAP2K5 region. The tract at residues 140–406 (MESDLHQIIH…QQIRFQPSLQ (267 aa)) is necessary for oligomerization. Asp-182 functions as the Proton acceptor in the catalytic mechanism. A TXY motif is present at residues 219–221 (TEY). The may not be required for kinase activity; required to stimulate MEF2C activity stretch occupies residues 407–806 (PVASEPVCPD…LSDLPDLQEP (400 aa)). Disordered regions lie at residues 424–475 (APSG…SDNT) and 488–727 (RSRL…PKGS). The segment covering 433 to 443 (SPPPALPPCSG) has biased composition (pro residues). Composition is skewed to basic and acidic residues over residues 502 to 519 (PEPR…EREE), 527 to 544 (RAKE…KERG), and 563 to 573 (DNDRSLLERWT). The Nuclear localization signal motif lies at 505–539 (RKPVTAQERQREREEKRRRRQERAKEREKRRQERE). 2 stretches are compositionally biased toward pro residues: residues 578 to 592 (PPVP…PTPK) and 627 to 643 (VCPP…PVPA). The segment covering 647-660 (TAPSTSLLASQSLV) has biased composition (polar residues). Residues 678–689 (PSGPPPPDPGLT) show a composition bias toward pro residues. The span at 693-710 (STSESPDVNLVTQQLSKS) shows a compositional bias: polar residues. Ser-710 bears the Phosphoserine mark. Thr-723 carries the phosphothreonine modification.

Belongs to the protein kinase superfamily. CMGC Ser/Thr protein kinase family. MAP kinase subfamily. As to quaternary structure, interacts with MAP2K5. Forms oligomers. Interacts with MEF2A, MEF2C and MEF2D; the interaction phosphorylates the MEF2s and enhances transcriptional activity of MEF2A, MEF2C but not MEF2D. Interacts with SGK1. Interacts with PML. Interacts (via N-terminal half) with HSP90AB1-CDC37 chaperone complex in resting cells; the interaction is MAP2K5-independent and prevents MAPK7 from ubiquitination and proteasomal degradation. Interacts with STUB1/CHIP; the interaction is enhanced in the presence of IGF1 or MAP2K5 and promotes STUB1/CHIP E3 ligase activity. Mg(2+) is required as a cofactor. Post-translationally, dually phosphorylated on Thr-219 and Tyr-221, which activates the enzyme.

It localises to the cytoplasm. The protein localises to the nucleus. It is found in the PML body. The enzyme catalyses L-seryl-[protein] + ATP = O-phospho-L-seryl-[protein] + ADP + H(+). The catalysed reaction is L-threonyl-[protein] + ATP = O-phospho-L-threonyl-[protein] + ADP + H(+). Activated by tyrosine and threonine phosphorylation. Activated in response to hyperosmolarity, hydrogen peroxide, and epidermal growth factor (EGF). Functionally, plays a role in various cellular processes such as proliferation, differentiation and cell survival. The upstream activator of MAPK7 is the MAPK kinase MAP2K5. Upon activation, it translocates to the nucleus and phosphorylates various downstream targets including MEF2C. EGF activates MAPK7 through a Ras-independent and MAP2K5-dependent pathway. As part of the MAPK/ERK signaling pathway, acts as a negative regulator of apoptosis in cardiomyocytes via interaction with STUB1/CHIP and promotion of STUB1-mediated ubiquitination and degradation of ICER-type isoforms of CREM. May have a role in muscle cell differentiation. May be important for endothelial function and maintenance of blood vessel integrity. MAP2K5 and MAPK7 interact specifically with one another and not with MEK1/ERK1 or MEK2/ERK2 pathways. Phosphorylates SGK1 at Ser-78 and this is required for growth factor-induced cell cycle progression. Involved in the regulation of p53/TP53 by disrupting the PML-MDM2 interaction. In Rattus norvegicus (Rat), this protein is Mitogen-activated protein kinase 7 (Mapk7).